The primary structure comprises 206 residues: Outer-membrane lipoprotein LolB (206 aa).

An N-terminal signal peptide occupies residues 1–18 (MKTFKFFTALFATAILTA). The N-palmitoyl cysteine moiety is linked to residue cysteine 19. Cysteine 19 is lipidated: S-diacylglycerol cysteine.

It belongs to the LolB family. Monomer.

The protein localises to the cell outer membrane. Functionally, plays a critical role in the incorporation of lipoproteins in the outer membrane after they are released by the LolA protein. The polypeptide is Outer-membrane lipoprotein LolB (Haemophilus influenzae (strain PittGG)).